Consider the following 169-residue polypeptide: Myosin regulatory light chain 2, skeletal muscle isoform A (169 aa).

Phosphoserine is present on serine 21. 3 EF-hand domains span residues 26–61 (SQIQ…MGQL), 96–131 (DPED…QCDR), and 132–167 (FTAE…GEEK). 4 residues coordinate Ca(2+): aspartate 39, asparagine 41, aspartate 43, and aspartate 50.

Myosin is a hexamer of 2 heavy chains and 4 light chains. Interacts with nanos3; the interaction negatively regulates mylpfa phosphorylation.

Myosin regulatory subunit that plays a role to maintain muscle integrity during early development. Plays a role in muscle contraction. In Danio rerio (Zebrafish), this protein is Myosin regulatory light chain 2, skeletal muscle isoform A (mylpfa).